Consider the following 774-residue polypeptide: Lysyl oxidase homolog 2 (774 aa).

The first 24 residues, methionine 1–alanine 24, serve as a signal peptide directing secretion. SRCR domains follow at residues leucine 57 to serine 158, isoleucine 187 to valine 301, valine 325 to asparagine 424, and leucine 434 to serine 543. Disulfide bonds link cysteine 83–cysteine 147, cysteine 96–cysteine 157, cysteine 127–cysteine 137, cysteine 217–cysteine 290, cysteine 230–cysteine 300, cysteine 264–cysteine 274, cysteine 350–cysteine 413, cysteine 363–cysteine 423, and cysteine 394–cysteine 404. An N-linked (GlcNAc...) asparagine glycan is attached at asparagine 287. Asparagine 454 carries an N-linked (GlcNAc...) asparagine glycan. Intrachain disulfides connect cysteine 463–cysteine 529, cysteine 476–cysteine 542, and cysteine 510–cysteine 520. Residues proline 547–asparagine 751 form a lysyl-oxidase like region. Ca(2+) is bound by residues aspartate 548 and leucine 549. Cystine bridges form between cysteine 572-cysteine 624, cysteine 578-cysteine 694, cysteine 656-cysteine 672, and cysteine 662-cysteine 684. Residues histidine 625, histidine 627, and histidine 629 each coordinate Cu cation. The N-linked (GlcNAc...) asparagine glycan is linked to asparagine 643. A cross-link (lysine tyrosylquinone (Lys-Tyr)) is located at residues lysine 652 to tyrosine 688. Tyrosine 688 bears the 2',4',5'-topaquinone mark. Positions 721, 723, 726, and 727 each coordinate Ca(2+).

The protein belongs to the lysyl oxidase family. Cu cation is required as a cofactor. The cofactor is lysine tyrosylquinone residue. In terms of processing, the lysine tyrosylquinone cross-link (LTQ) is generated by condensation of the epsilon-amino group of a lysine with a topaquinone produced by oxidation of tyrosine.

It localises to the secreted. The protein resides in the extracellular space. The protein localises to the extracellular matrix. Its subcellular location is the basement membrane. It is found in the nucleus. It localises to the chromosome. The protein resides in the endoplasmic reticulum. The catalysed reaction is L-lysyl-[protein] + O2 + H2O = (S)-2-amino-6-oxohexanoyl-[protein] + H2O2 + NH4(+). In terms of biological role, mediates the post-translational oxidative deamination of lysine residues on target proteins leading to the formation of deaminated lysine (allysine). Acts as a transcription corepressor and specifically mediates deamination of trimethylated 'Lys-4' of histone H3 (H3K4me3), a specific tag for epigenetic transcriptional activation. Shows no activity against histone H3 when it is trimethylated on 'Lys-9' (H3K9me3) or 'Lys-27' (H3K27me3) or when 'Lys-4' is monomethylated (H3K4me1) or dimethylated (H3K4me2). Also mediates deamination of methylated TAF10, a member of the transcription factor IID (TFIID) complex, which induces release of TAF10 from promoters, leading to inhibition of TFIID-dependent transcription. LOXL2-mediated deamination of TAF10 results in transcriptional repression of genes required for embryonic stem cell pluripotency including POU5F1/OCT4, NANOG, KLF4 and SOX2. Involved in epithelial to mesenchymal transition (EMT) via interaction with SNAI1 and participates in repression of E-cadherin CDH1, probably by mediating deamination of histone H3. During EMT, involved with SNAI1 in negatively regulating pericentromeric heterochromatin transcription. SNAI1 recruits LOXL2 to pericentromeric regions to oxidize histone H3 and repress transcription which leads to release of heterochromatin component CBX5/HP1A, enabling chromatin reorganization and acquisition of mesenchymal traits. Interacts with the endoplasmic reticulum protein HSPA5 which activates the IRE1-XBP1 pathway of the unfolded protein response, leading to expression of several transcription factors involved in EMT and subsequent EMT induction. When secreted into the extracellular matrix, promotes cross-linking of extracellular matrix proteins by mediating oxidative deamination of peptidyl lysine residues in precursors to fibrous collagen and elastin. Acts as a regulator of sprouting angiogenesis, probably via collagen IV scaffolding. Acts as a regulator of chondrocyte differentiation, probably by regulating expression of factors that control chondrocyte differentiation. The polypeptide is Lysyl oxidase homolog 2 (LOXL2) (Gallus gallus (Chicken)).